The primary structure comprises 337 residues: Ferredoxin--NADP reductase (337 aa).

FAD contacts are provided by D33, Q41, Y46, A86, F120, D286, and T327.

Belongs to the ferredoxin--NADP reductase type 2 family. In terms of assembly, homodimer. FAD is required as a cofactor.

The catalysed reaction is 2 reduced [2Fe-2S]-[ferredoxin] + NADP(+) + H(+) = 2 oxidized [2Fe-2S]-[ferredoxin] + NADPH. The polypeptide is Ferredoxin--NADP reductase (Rickettsia canadensis (strain McKiel)).